A 291-amino-acid polypeptide reads, in one-letter code: Inhibitory synaptic factor 1 (291 aa).

The tract at residues 1 to 25 (MNIRGAPDLGQPSDDPNSGGERERI) is disordered. A coiled-coil region spans residues 30 to 63 (KMVIGQLEGILRELKEVAKELREVVSQIDKLTSD). 2 disordered regions span residues 120–186 (TPSD…ERVR) and 201–291 (EEGD…KGKN). The span at 201 to 213 (EEGDGEEVEEEEA) shows a compositional bias: acidic residues. A compositionally biased stretch (polar residues) spans 262–284 (RNSSTQTVSDKSTQTVLPYTATK).

The protein belongs to the INSYN1 family. In terms of assembly, interacts with GPHN.

The protein resides in the postsynaptic density. Its function is as follows. Component of the protein machinery at the inhibitory synapses, probably acting as a scaffold. Inhibitory synapses dampen neuronal activity through postsynaptic hyperpolarization. This synaptic inhibition is fundamental for the functioning of the central nervous system, shaping and orchestrating the flow of information through neuronal networks to generate a precise neural code. This chain is Inhibitory synaptic factor 1 (Insyn1), found in Rattus norvegicus (Rat).